A 332-amino-acid polypeptide reads, in one-letter code: Melanocortin receptor 4 (332 aa).

The Extracellular segment spans residues 1 to 43 (MNSTLQHGMHTSLHFWNRSTYGQHSNATESLGKGYPDGGCYEQ). Residues asparagine 2, asparagine 17, and asparagine 26 are each glycosylated (N-linked (GlcNAc...) asparagine). Intrachain disulfides connect cysteine 40–cysteine 279 and cysteine 271–cysteine 277. A helical transmembrane segment spans residues 44 to 69 (LFVSPEVFVTLGVISLLENILVIVAI). Over 70–81 (AKNKNLHSPMYF) the chain is Cytoplasmic. Residues 82-106 (FICSLAVADMLVSVSNGSETIVITL) traverse the membrane as a helical segment. Ca(2+) contacts are provided by glutamate 100, aspartate 122, and aspartate 126. At 107 to 123 (LNSTDTDAQSFTVNIDN) the chain is on the extracellular side. Residues 124–145 (VIDSVICSSLLASICSLLSIAV) traverse the membrane as a helical segment. Over 146–165 (DRYFTIFYALQYHNIMTVRR) the chain is Cytoplasmic. A helical membrane pass occupies residues 166–186 (VGIIISCIWAACTVSGILFII). Residues 187 to 191 (YSDST) lie on the Extracellular side of the membrane. A helical transmembrane segment spans residues 192–215 (AVIICLITMFFTMLALMASLYVHM). Over 216–248 (FLMARLHIKRIAVLPGTGTIRQGANMKGAITLT) the chain is Cytoplasmic. Residues 249–271 (ILIGVFVVCWAPFFLHLIFYISC) traverse the membrane as a helical segment. Residues 272–280 (PQNPYCVCF) lie on the Extracellular side of the membrane. A helical transmembrane segment spans residues 281–304 (MSHFNLYLILIMCNSIIDPLIYAL). The Cytoplasmic segment spans residues 305-332 (RSQELRKTFKEIICCYPLGGLCDLSSRY). The S-palmitoyl cysteine moiety is linked to residue cysteine 318.

The protein belongs to the G-protein coupled receptor 1 family. As to quaternary structure, homodimer; disulfide-linked, also forms higher order oligomers. Interacts with GNAS. Interacts with ATRNL1. Interacts with MGRN1; this interaction competes with GNAS-binding and thus inhibits agonist-induced cAMP production. Interacts with MRAP and MRAP2; these associated factors increase ligand-sensitivity and generation of cAMP.

It is found in the cell membrane. Functionally, hormone receptor that acts as a key component of the leptin-melanocortin pathway at the intersection of homeostatic maintenance of energetic state. Plays a role in regulating food intake: activation by a stimulating hormone such as anorexigenic alpha-melanocyte stimulating hormone (alpha-MSH) inhibits appetite, whereas binding to a natural antagonist like Agouti-related protein/AGRP promotes appetite. G-protein-coupled receptor that activates conventional Galphas signaling leading to induction of anorexogenic signaling in the hypothalamus to result in negative energy balance. Regulates the firing activity of neurons from the hypothalamus by alpha-MSH and AGRP independently of Galphas signaling by ligand-induced coupling of closure of inwardly rectifying potassium channel KCNJ13. In intestinal epithelial cells, plays a role in the inhibition of hepatic glucose production via nesfatin-1/NUCB2 leading to increased cyclic adenosine monophosphate (cAMP) levels and glucagon-like peptide 1 (GLP-1) secretion in the intestinal epithelium. The chain is Melanocortin receptor 4 (MC4R) from Vulpes vulpes (Red fox).